Reading from the N-terminus, the 705-residue chain is Polyribonucleotide nucleotidyltransferase (705 aa).

The Mg(2+) site is built by Asp-486 and Asp-492. Positions 553 to 612 (PRIYTMKINPEKIKDVIGKGGSVIRALTDETGTTIEIEDDGTIKIAATDGDKAKHAIRRI) constitute a KH domain. The S1 motif domain maps to 622–690 (GRIYAGKVTR…RQGRIRLSIK (69 aa)).

Belongs to the polyribonucleotide nucleotidyltransferase family. As to quaternary structure, component of the RNA degradosome, which is a multiprotein complex involved in RNA processing and mRNA degradation. Mg(2+) is required as a cofactor.

It is found in the cytoplasm. The catalysed reaction is RNA(n+1) + phosphate = RNA(n) + a ribonucleoside 5'-diphosphate. In terms of biological role, involved in mRNA degradation. Catalyzes the phosphorolysis of single-stranded polyribonucleotides processively in the 3'- to 5'-direction. This chain is Polyribonucleotide nucleotidyltransferase, found in Yersinia pseudotuberculosis serotype O:3 (strain YPIII).